A 182-amino-acid polypeptide reads, in one-letter code: Probable pyruvoyl-dependent arginine decarboxylase (182 aa).

Position 43 is a pyruvic acid (Ser) (serine 43).

It belongs to the PdaD family. Requires pyruvate as cofactor.

It catalyses the reaction L-arginine + H(+) = agmatine + CO2. This is Probable pyruvoyl-dependent arginine decarboxylase from Chloroherpeton thalassium (strain ATCC 35110 / GB-78).